The following is a 1451-amino-acid chain: DNA polymerase III PolC-type (1451 aa).

The Exonuclease domain maps to 416 to 575; that stretch reads FVIFDIETTG…YDTEALKKVF (160 aa).

Belongs to the DNA polymerase type-C family. PolC subfamily.

Its subcellular location is the cytoplasm. The enzyme catalyses DNA(n) + a 2'-deoxyribonucleoside 5'-triphosphate = DNA(n+1) + diphosphate. Required for replicative DNA synthesis. This DNA polymerase also exhibits 3' to 5' exonuclease activity. This chain is DNA polymerase III PolC-type, found in Mycoplasma genitalium (strain ATCC 33530 / DSM 19775 / NCTC 10195 / G37) (Mycoplasmoides genitalium).